An 88-amino-acid chain; its full sequence is Small ribosomal subunit protein uS15 (88 aa).

It belongs to the universal ribosomal protein uS15 family. As to quaternary structure, part of the 30S ribosomal subunit. Forms a bridge to the 50S subunit in the 70S ribosome, contacting the 23S rRNA.

One of the primary rRNA binding proteins, it binds directly to 16S rRNA where it helps nucleate assembly of the platform of the 30S subunit by binding and bridging several RNA helices of the 16S rRNA. Its function is as follows. Forms an intersubunit bridge (bridge B4) with the 23S rRNA of the 50S subunit in the ribosome. This chain is Small ribosomal subunit protein uS15, found in Francisella tularensis subsp. holarctica (strain LVS).